An 832-amino-acid chain; its full sequence is pre-rRNA 2'-O-ribose RNA methyltransferase FTSJ3 (832 aa).

S-adenosyl-L-methionine contacts are provided by glycine 56, tryptophan 58, aspartate 76, aspartate 92, and aspartate 117. Residue lysine 157 is the Proton acceptor of the active site. Disordered stretches follow at residues 332–358 (INLS…ADEM), 485–523 (RLER…LEEK), and 546–631 (DADE…GLVE). Composition is skewed to basic and acidic residues over residues 345 to 358 (EEEK…ADEM) and 485 to 495 (RLERERREQGV). The span at 503–514 (EEEEEEEEEEEN) shows a compositional bias: acidic residues. A compositionally biased stretch (basic residues) spans 570 to 579 (KTKKKGQKKK). Residues 600-618 (AEAEAEQSSDDDSSSDEEG) show a composition bias toward acidic residues. A coiled-coil region spans residues 726–758 (IKKVAEAKARKKRRMLKKMEQMKKKAEAVVSTV). Positions 795-832 (GPRVRRPPGVKGQFKVVDSRLKKDVRAQKRKEQKKRRK) are disordered. Residues 811–821 (VDSRLKKDVRA) show a composition bias toward basic and acidic residues. The span at 822–832 (QKRKEQKKRRK) shows a compositional bias: basic residues.

It belongs to the class I-like SAM-binding methyltransferase superfamily. RNA methyltransferase RlmE family. SPB1 subfamily. As to quaternary structure, interacts with NIP7.

The protein localises to the nucleus. Its subcellular location is the nucleolus. It catalyses the reaction a ribonucleotide in rRNA + S-adenosyl-L-methionine = a 2'-O-methylribonucleotide in rRNA + S-adenosyl-L-homocysteine + H(+). In terms of biological role, RNA 2'-O-methyltransferase involved in the processing of the 34S pre-rRNA to 18S rRNA and in 40S ribosomal subunit formation. The chain is pre-rRNA 2'-O-ribose RNA methyltransferase FTSJ3 from Gallus gallus (Chicken).